Here is a 608-residue protein sequence, read N- to C-terminus: Actin-interacting protein 1 (608 aa).

WD repeat units follow at residues 62–101 (EHSC…HLLK), 106–149 (PIAG…GEIS), 150–190 (GQSK…FKMT), 193–232 (DHSR…LVGE), 237–276 (AHKG…LVSE), 323–362 (GHNK…NDRI), 366–403 (GHGN…YTDY), 444–483 (PIKY…LEPK), 487–526 (DHLG…PAHN), 531–570 (FHSA…KHTI), and 575–607 (HPQS…HVEN).

It belongs to the WD repeat AIP1 family. As to expression, expressed in pupal wing cells.

The protein localises to the cytoplasm. It is found in the cytoskeleton. Its function is as follows. Induces disassembly of actin filaments in conjunction with ADF/cofilin family proteins. Together with GMF, promotes Arp2/3-nucleated actin filament array disassembly. Essential for organismal and cell viability. Required for the development of normal wing cell planar polarity. In egg chambers and together with GMF, plays an important role in directional migration of border cell clusters. The protein is Actin-interacting protein 1 (flr) of Drosophila melanogaster (Fruit fly).